The following is a 147-amino-acid chain: MKVIAINKKARFDYSLIDEFEAGIVLLGTEVKALKYHSASLNEAFVAFRRFELWLNNMHVPPYKPASRFNHVPTRSRKLLVHKRQLNKISGAVRTKGLTLVPLSIYVNENGLIKVKFALAKGKKKHDKRQDIKDRDWARKQARQDFS.

The segment at 124 to 147 (KKHDKRQDIKDRDWARKQARQDFS) is disordered. Positions 128–147 (KRQDIKDRDWARKQARQDFS) are enriched in basic and acidic residues.

This sequence belongs to the SmpB family.

It is found in the cytoplasm. Functionally, required for rescue of stalled ribosomes mediated by trans-translation. Binds to transfer-messenger RNA (tmRNA), required for stable association of tmRNA with ribosomes. tmRNA and SmpB together mimic tRNA shape, replacing the anticodon stem-loop with SmpB. tmRNA is encoded by the ssrA gene; the 2 termini fold to resemble tRNA(Ala) and it encodes a 'tag peptide', a short internal open reading frame. During trans-translation Ala-aminoacylated tmRNA acts like a tRNA, entering the A-site of stalled ribosomes, displacing the stalled mRNA. The ribosome then switches to translate the ORF on the tmRNA; the nascent peptide is terminated with the 'tag peptide' encoded by the tmRNA and targeted for degradation. The ribosome is freed to recommence translation, which seems to be the essential function of trans-translation. This chain is SsrA-binding protein, found in Neorickettsia sennetsu (strain ATCC VR-367 / Miyayama) (Ehrlichia sennetsu).